The chain runs to 650 residues: Chaperone protein DnaK (650 aa).

A Phosphothreonine; by autocatalysis modification is found at Thr200. Residues 611 to 636 (AQQAGAAGAAGAAEGAAHAGGAQQAA) show a composition bias toward low complexity. The interval 611–637 (AQQAGAAGAAGAAEGAAHAGGAQQAAD) is disordered.

The protein belongs to the heat shock protein 70 family.

Its function is as follows. Acts as a chaperone. This Burkholderia ambifaria (strain MC40-6) protein is Chaperone protein DnaK.